The chain runs to 423 residues: Serine hydroxymethyltransferase (423 aa).

(6S)-5,6,7,8-tetrahydrofolate is bound by residues Leu120 and 124-126; that span reads GHL. Lys229 is modified (N6-(pyridoxal phosphate)lysine). A (6S)-5,6,7,8-tetrahydrofolate-binding site is contributed by 353 to 355; the sequence is SPF.

It belongs to the SHMT family. As to quaternary structure, homodimer. Pyridoxal 5'-phosphate is required as a cofactor.

It is found in the cytoplasm. It carries out the reaction (6R)-5,10-methylene-5,6,7,8-tetrahydrofolate + glycine + H2O = (6S)-5,6,7,8-tetrahydrofolate + L-serine. Its pathway is one-carbon metabolism; tetrahydrofolate interconversion. The protein operates within amino-acid biosynthesis; glycine biosynthesis; glycine from L-serine: step 1/1. In terms of biological role, catalyzes the reversible interconversion of serine and glycine with tetrahydrofolate (THF) serving as the one-carbon carrier. This reaction serves as the major source of one-carbon groups required for the biosynthesis of purines, thymidylate, methionine, and other important biomolecules. Also exhibits THF-independent aldolase activity toward beta-hydroxyamino acids, producing glycine and aldehydes, via a retro-aldol mechanism. The polypeptide is Serine hydroxymethyltransferase (Prochlorococcus marinus (strain MIT 9301)).